The sequence spans 433 residues: MKTHYNLRVIAARAVAQVLDQGQSLGALLPPLQAPLSEKDRALLQELCFGIMRVLPQLEWLLRQLMAKPLTGKQRPVHYLLMVGLYQLTYTRIPPHAALAETVEGAVAMKRPQFKGLINGVLRQFQRQQPALLADAERQDIRHLHPSWLQKRILAAWPAQYAQIIDANNQRPPMWLRVNRLHHSRDAYLALLAGTDIAAVAHSQLPDAIRLEMPCNVGRLPGFDRGWVTVQDASAQGCALLLAPQNSETILDLCAAPGGKTTHILEIAPAARVMAVDVDGQRAARIHDNLQRLGMQAEVVIGDGRTPDAWRSGMLFDRILLDAPCSATGVIRRHPDIKWLRRDGDIAELAELQRQILCAAWRVLKLGGTLLYATCSILPEENRGQIAAFLADHPDALLQETGDAAAPGLQCLPVPTSGDGFFYAKMIKETQAC.

S-adenosyl-L-methionine-binding positions include 254 to 260, Asp-277, Asp-303, and Asp-322; that span reads CAAPGGK. Catalysis depends on Cys-375, which acts as the Nucleophile.

Belongs to the class I-like SAM-binding methyltransferase superfamily. RsmB/NOP family.

Its subcellular location is the cytoplasm. It catalyses the reaction cytidine(967) in 16S rRNA + S-adenosyl-L-methionine = 5-methylcytidine(967) in 16S rRNA + S-adenosyl-L-homocysteine + H(+). Specifically methylates the cytosine at position 967 (m5C967) of 16S rRNA. This Sodalis glossinidius (strain morsitans) protein is Ribosomal RNA small subunit methyltransferase B.